A 282-amino-acid polypeptide reads, in one-letter code: MSGLRTLLGLGLLVAGSRLPRVISQQSVCRARPIWWGTQRRGSETMAGAAVKYLSQEEAQAVDQELFNEYQFSVDQLMELAGLSCATAIAKAYPPTSMSKSPPTVLVICGPGNNGGDGLVCARHLKLFGYQPTIYYPKRPNKPLFTGLVTQCQKMDIPFLGEMPPEPMMVDELYELVVDAIFGFSFKGDVREPFHSILSVLSGLTVPIASIDIPSGWDVEKGNPSGIQPDLLISLTAPKKSATHFTGRYHYLGGRFVPPALEKKYQLNLPSYPDTECVYRLQ.

The transit peptide at 1–53 directs the protein to the mitochondrion; sequence MSGLRTLLGLGLLVAGSRLPRVISQQSVCRARPIWWGTQRRGSETMAGAAVKY. Phosphoserine; by PKA is present on Ser-43. Positions 59 to 269 constitute a YjeF N-terminal domain; the sequence is AQAVDQELFN…ALEKKYQLNL (211 aa). 113-117 is a (6S)-NADPHX binding site; sequence NNGGD. Residue Asn-114 coordinates K(+). Residue Lys-138 is modified to N6-succinyllysine. Asp-179 provides a ligand contact to K(+). Residues 183–189 and Asp-212 each bind (6S)-NADPHX; that span reads GFSFKGD. Ser-215 contacts K(+).

This sequence belongs to the NnrE/AIBP family. In terms of assembly, homodimer. Interacts with APOA1 and APOA2. Requires K(+) as cofactor. Undergoes physiological phosphorylation during sperm capacitation, downstream to PKA activation. Detected in testis and sperm (at protein level). Expressed at high levels in heart, liver, kidney, and testis.

Its subcellular location is the mitochondrion. The protein localises to the secreted. The enzyme catalyses (6R)-NADHX = (6S)-NADHX. The catalysed reaction is (6R)-NADPHX = (6S)-NADPHX. In terms of biological role, catalyzes the epimerization of the S- and R-forms of NAD(P)HX, a damaged form of NAD(P)H that is a result of enzymatic or heat-dependent hydration. This is a prerequisite for the S-specific NAD(P)H-hydrate dehydratase to allow the repair of both epimers of NAD(P)HX. Accelerates cholesterol efflux from endothelial cells to high-density lipoprotein (HDL) and thereby regulates angiogenesis. This chain is NAD(P)H-hydrate epimerase, found in Mus musculus (Mouse).